A 210-amino-acid chain; its full sequence is FMN-dependent NADH:quinone oxidoreductase 8 (210 aa).

FMN is bound by residues Ser10 and 16–18 (SIS).

This sequence belongs to the azoreductase type 1 family. Homodimer. The cofactor is FMN.

The catalysed reaction is 2 a quinone + NADH + H(+) = 2 a 1,4-benzosemiquinone + NAD(+). It carries out the reaction N,N-dimethyl-1,4-phenylenediamine + anthranilate + 2 NAD(+) = 2-(4-dimethylaminophenyl)diazenylbenzoate + 2 NADH + 2 H(+). Quinone reductase that provides resistance to thiol-specific stress caused by electrophilic quinones. Functionally, also exhibits azoreductase activity. Catalyzes the reductive cleavage of the azo bond in aromatic azo compounds to the corresponding amines. The chain is FMN-dependent NADH:quinone oxidoreductase 8 from Burkholderia lata (strain ATCC 17760 / DSM 23089 / LMG 22485 / NCIMB 9086 / R18194 / 383).